A 3938-amino-acid chain; its full sequence is Protein bassoon (3938 aa).

The disordered stretch occupies residues 1–158 (MGNEASLEGG…PTSPYSVPQI (158 aa)). Glycine 2 carries N-myristoyl glycine lipidation. A compositionally biased stretch (gly residues) spans 9-29 (GGAGEGPLPPGGSGLGPGPGA). Over residues 31 to 61 (KPPSALAGGGQLPVAGAARAAGPPTPGLGLV) the composition is skewed to low complexity. The tract at residues 62-70 (PGPGPGPGP) is 4 X 2 AA tandem repeats of P-G. Polar residues-rich tracts occupy residues 86 to 98 (QRAT…QASA) and 127 to 154 (QVDS…SPYS). Residue serine 142 is modified to Phosphoserine. Arginine 145 carries the omega-N-methylarginine modification. C4-type zinc fingers lie at residues 167-190 (CPIC…CTQC) and 195-217 (CNQC…CLNC). 2 disordered regions span residues 228 to 346 (TTAP…LTGK) and 361 to 456 (LMSV…KTMP). The segment covering 230-240 (APRSKSQQQLH) has biased composition (polar residues). Phosphoserine occurs at positions 241 and 245. Positions 361 to 376 (LMSVQPEADTQGQPSP) are enriched in polar residues. Positions 394 to 406 (PRPPGSGPGPGPT) are enriched in pro residues. 2 consecutive C4-type zinc fingers follow at residues 462 to 485 (CPLC…CTAC) and 490 to 512 (CTLC…CLNC). Disordered regions lie at residues 523 to 921 (GEPA…LQGG), 934 to 1247 (GRLW…TPAG), 1294 to 1541 (MDPM…WQQS), and 1561 to 1611 (RMVH…RAPS). A compositionally biased stretch (pro residues) spans 526 to 539 (APLPLPTPQEPPAG). Over residues 548–589 (SPLKQKGPQGPGQPSGSLPPKASPQAAKASPQAAKASPQAKP) the composition is skewed to low complexity. Repeat copies occupy residues 568–574 (KASPQAA), 575–581 (KASPQAA), and 582–588 (KASPQAK). The interval 568–588 (KASPQAAKASPQAAKASPQAK) is 3 X 7 AA tandem repeats of K-A-S-P-Q-A-[AK]. A compositionally biased stretch (pro residues) spans 616–629 (VPKPPPETAVPPGT). Positions 668–677 (QDLSRSPQSL) are enriched in polar residues. Over residues 678–692 (SDTGYSSDGVSSSQS) the composition is skewed to low complexity. Residues 693 to 702 (EITGVVQQEV) are compositionally biased toward polar residues. Acidic residues-rich tracts occupy residues 769-784 (FDSD…EDDS) and 847-858 (SAEEDNLEEDDT). Arginine 863 is subject to Omega-N-methylarginine. Serine 965 carries the post-translational modification Phosphoserine. Residues 979-996 (PASTPSYTSGTSPTSLSS) are compositionally biased toward low complexity. A coiled-coil region spans residues 1032–1087 (IEDSSEEEELREEEELLREQEKMREVEQQRIRSTARKTRRDKEELRAQRRRERSKT). Acidic residues predominate over residues 1034–1047 (DSSEEEELREEEEL). A phosphoserine mark is found at serine 1035 and serine 1036. A compositionally biased stretch (basic and acidic residues) spans 1048 to 1061 (LREQEKMREVEQQR). Serine 1085 carries the phosphoserine modification. Threonine 1087 is subject to Phosphothreonine. Phosphoserine occurs at positions 1093 and 1099. The segment covering 1102 to 1117 (EELRQAAEMEELHRSS) has biased composition (basic and acidic residues). 2 stretches are compositionally biased toward low complexity: residues 1118–1128 (CSEYSPSPSLD) and 1158–1175 (SPTE…SGRP). A coiled-coil region spans residues 1176 to 1203 (LKSAEEAYEDMMRKAELLQRQQGQAAGA). The segment covering 1177-1192 (KSAEEAYEDMMRKAEL) has biased composition (basic and acidic residues). Positions 1194–1204 (QRQQGQAAGAR) are enriched in low complexity. The span at 1211–1224 (SQPTGPRSQGSFEY) shows a compositional bias: polar residues. The residue at position 1221 (serine 1221) is a Phosphoserine. Residues 1318–1328 (SFPTSTSSDSS) show a composition bias toward low complexity. Threonine 1339 carries O-linked (GlcNAc) threonine glycosylation. Residues 1342 to 1351 (FAKEPQEPLK) show a composition bias toward basic and acidic residues. 2 stretches are compositionally biased toward low complexity: residues 1352 to 1364 (LHSS…LASK) and 1374 to 1386 (PGTP…APCP). O-linked (GlcNAc) threonine glycosylation occurs at threonine 1380. Positions 1402 to 1426 (SPSTSSTIHSYGQPPTTANYGSQTE) are enriched in polar residues. Phosphoserine occurs at positions 1470, 1479, and 1481. The span at 1476-1487 (STPSESPTFSPS) shows a compositional bias: low complexity. Polar residues-rich tracts occupy residues 1496 to 1510 (EFST…SSDI) and 1561 to 1597 (RMVH…SQMP). Residues arginine 1780 and arginine 1784 each carry the omega-N-methylarginine modification. Asymmetric dimethylarginine; alternate is present on arginine 1794. Residue arginine 1794 is modified to Omega-N-methylarginine; alternate. Position 1806 is an omega-N-methylarginine (arginine 1806). Residues 1914–1964 (PSAPDKSVTDAALPGQSSGPFYSPRDPEPPEPLTFRAQGVVGPGPHEEQRP) are disordered. Threonine 1922 carries an O-linked (GlcNAc) threonine glycan. A phosphoserine mark is found at serine 1978 and serine 2034. Arginine 2039 and arginine 2069 each carry omega-N-methylarginine. Arginine 2243, arginine 2253, and arginine 2259 each carry asymmetric dimethylarginine. The disordered stretch occupies residues 2280-2305 (AAKASGAGGPPRPELPAGGAREEPLS). Threonine 2307 carries an O-linked (GlcNAc) threonine glycan. 2 disordered regions span residues 2318-2343 (VAQA…SGVL) and 2461-2486 (EEQK…PPAA). Residues 2345 to 2470 (RPVMEKEEAS…EEQKQRQKAP (126 aa)) adopt a coiled-coil conformation. An O-linked (GlcNAc) threonine glycan is attached at threonine 2510. A disordered region spans residues 2513-2648 (PGQAREPVLH…HEASASSSAA (136 aa)). Polar residues predominate over residues 2527–2537 (SSASDMSLQTE). A Phosphoserine modification is found at serine 2564. Residues threonine 2581 and threonine 2608 each carry the phosphothreonine modification. Over residues 2629-2641 (RHSDSGSDSKHEA) the composition is skewed to basic and acidic residues. Threonine 2685 carries an O-linked (GlcNAc) threonine glycan. The interval 2715–3263 (EPDGQAQGVA…GGVSGRPGKD (549 aa)) is interaction with DAO. Phosphoserine is present on residues serine 2796, serine 2845, and serine 2851. Residues 2839-2859 (TLQRSLSDPKPLSPTAEESAK) form a disordered region. Threonine 2930 carries an O-linked (GlcNAc) threonine glycan. Residues 2933–2975 (SLLRELDRDLRLVEHESTKLRKKQAELDEEEKEIDAKLKYLEL) adopt a coiled-coil conformation. The interval 2934–2996 (LLRELDRDLR…DRVGRDYPPL (63 aa)) is sufficient for binding to ERC2. Position 3007 is a phosphoserine (serine 3007). Polar residues predominate over residues 3055-3068 (TQYTAGSSGPTQNG). 4 disordered regions span residues 3055-3148 (TQYT…ADLE), 3162-3399 (AVTV…SRKF), 3414-3546 (QQRY…PRAH), and 3569-3910 (YHLG…VFSK). Residues 3184–3196 (EHGKAPEHPRGGD) show a composition bias toward basic and acidic residues. Residues 3198–3222 (SSVSQSPAPTYPSDSHYTSLEQNVP) show a composition bias toward polar residues. Residue serine 3286 is modified to Phosphoserine. Residues 3304 to 3315 (ESNGRPASTHYY) show a composition bias toward polar residues. 3 stretches are compositionally biased toward basic and acidic residues: residues 3316–3328 (SDSD…RADK), 3358–3377 (QGME…KDVE), and 3450–3469 (LSSH…RETA). Serine 3368 bears the Phosphoserine mark. At arginine 3488 the chain carries Omega-N-methylarginine. Positions 3506-3520 (PLGRPRPAGGALPPG) are enriched in low complexity. Composition is skewed to basic and acidic residues over residues 3535 to 3546 (VQEHVKDGPRAH) and 3578 to 3588 (WFDKPRDARSD). A compositionally biased stretch (basic residues) spans 3638 to 3651 (EHRHHGDHGRHSGR). Basic and acidic residues predominate over residues 3652–3676 (HAGEEPGRRAARPHARDMGRHETRP). Residues 3751–3820 (PQQSQPPSSR…ARLQQQSQPT (70 aa)) are compositionally biased toward low complexity. The stretch at 3772–3803 (QTQQQQQQQQQQQQQQQQQQQQQQQQGLGQQA) forms a coiled coil. Arginine 3822 bears the Omega-N-methylarginine mark. Over residues 3834–3848 (KPQPGPTTAPGPQPA) the composition is skewed to pro residues. Low complexity-rich tracts occupy residues 3860 to 3887 (KPAA…KTGA) and 3894 to 3904 (GAPAGQPAAEG).

In terms of assembly, interacts with PCLO, ERC2/CAST1, RIMS1 and UNC13A. Interacts with TPRG1L. Interacts with DYNLL1 and DYNLL2; these interactions potentially link PTVs to dynein and myosin V motor complexes. Interacts with ATG5; this interaction is important for the regulation of presynaptic autophagy. Interacts (via C-terminus) with TRIO (via N-terminus). Interacts with CTBP1. Interacts with SIAH1; this interaction negatively regulates SIAH1 E3 ligase activity. Interacts (via coiled region) with DAO; the interaction is direct. Post-translationally, myristoylated. The N-terminal myristoylation is not sufficient for presynaptic localization. In terms of tissue distribution, detected at synapses in the stratum lucidum in the hippocampus CA3 region (at protein level).

Its subcellular location is the cytoplasm. The protein localises to the presynaptic active zone. The protein resides in the cytoskeleton. It is found in the cytoplasmic vesicle. It localises to the secretory vesicle. Its subcellular location is the synaptic vesicle membrane. In terms of biological role, scaffold protein of the presynaptic cytomatrix at the active zone (CAZ) which is the place in the synapse where neurotransmitter is released. After synthesis, participates in the formation of Golgi-derived membranous organelles termed Piccolo-Bassoon transport vesicles (PTVs) that are transported along axons to sites of nascent synaptic contacts. At the presynaptic active zone, regulates the spatial organization of synaptic vesicle cluster, the protein complexes that execute membrane fusion and compensatory endocytosis. Also functions in processes other than assembly such as the regulation of specific presynaptic protein ubiquitination by interacting with SIAH1 or the regulation of presynaptic autophagy by associating with ATG5. Also mediates synapse to nucleus communication leading to reconfiguration of gene expression by associating with the transcriptional corepressor CTBP1 and by subsequently reducing the size of its pool available for nuclear import. Inhibits the activity of the proportion of DAO enzyme that localizes to the presynaptic active zone, which may modulate synaptic transmission. The chain is Protein bassoon from Rattus norvegicus (Rat).